The primary structure comprises 203 residues: Large ribosomal subunit protein uL18 (203 aa).

The protein belongs to the universal ribosomal protein uL18 family. In terms of assembly, part of the 50S ribosomal subunit. Contacts the 5S and 23S rRNAs.

This is one of the proteins that bind and probably mediate the attachment of the 5S RNA into the large ribosomal subunit, where it forms part of the central protuberance. The sequence is that of Large ribosomal subunit protein uL18 from Pyrococcus abyssi (strain GE5 / Orsay).